A 187-amino-acid chain; its full sequence is Probable cobalt-precorrin-6B C(15)-methyltransferase (decarboxylating) (187 aa).

S-adenosyl-L-methionine-binding positions include Thr17, 41–45, Asp62, and Gly91; that span reads GCGTG.

The protein belongs to the methyltransferase superfamily. Archaeal-type CbiT family.

It catalyses the reaction Co-precorrin-6B + S-adenosyl-L-methionine = Co-precorrin-7 + S-adenosyl-L-homocysteine + CO2. The protein operates within cofactor biosynthesis; adenosylcobalamin biosynthesis; cob(II)yrinate a,c-diamide from sirohydrochlorin (anaerobic route): step 8/10. Its function is as follows. Catalyzes the methylation of C-15 in cobalt-precorrin-6B followed by the decarboxylation of C-12 to form cobalt-precorrin-7. This Methanobrevibacter smithii (strain ATCC 35061 / DSM 861 / OCM 144 / PS) protein is Probable cobalt-precorrin-6B C(15)-methyltransferase (decarboxylating).